An 86-amino-acid chain; its full sequence is Anti-adapter protein IraP (86 aa).

Residues 1–38 (MKNLIAELLVKLAQKEEEAKELTVQVEALEIVVTALLR) adopt a coiled-coil conformation.

This sequence belongs to the IraP family. Interacts with RssB.

It is found in the cytoplasm. In terms of biological role, inhibits RpoS proteolysis by regulating RssB activity, thereby increasing the stability of the sigma stress factor RpoS especially during phosphate starvation, but also in stationary phase and during nitrogen starvation. Its effect on RpoS stability is due to its interaction with RssB, which probably blocks the interaction of RssB with RpoS, and the consequent delivery of the RssB-RpoS complex to the ClpXP protein degradation pathway. This chain is Anti-adapter protein IraP, found in Klebsiella pneumoniae subsp. pneumoniae (strain ATCC 700721 / MGH 78578).